Reading from the N-terminus, the 422-residue chain is 2-(3-amino-3-carboxypropyl)histidine synthase subunit 1 (422 aa).

[4Fe-4S] cluster contacts are provided by Cys128, Cys234, and Cys363.

This sequence belongs to the DPH1/DPH2 family. DPH1 subfamily. As to quaternary structure, component of the 2-(3-amino-3-carboxypropyl)histidine synthase complex composed of DPH1, DPH2, DPH3 and a NADH-dependent reductase, predominantly CBR1. [4Fe-4S] cluster serves as cofactor.

It localises to the cytoplasm. The catalysed reaction is L-histidyl-[translation elongation factor 2] + S-adenosyl-L-methionine = 2-[(3S)-amino-3-carboxypropyl]-L-histidyl-[translation elongation factor 2] + S-methyl-5'-thioadenosine + H(+). The protein operates within protein modification; peptidyl-diphthamide biosynthesis. In terms of biological role, catalyzes the first step of diphthamide biosynthesis, a post-translational modification of histidine which occurs in elongation factor 2. DPH1 and DPH2 transfer a 3-amino-3-carboxypropyl (ACP) group from S-adenosyl-L-methionine (SAM) to a histidine residue, the reaction is assisted by a reduction system comprising DPH3 and a NADH-dependent reductase, predominantly CBR1. The protein is 2-(3-amino-3-carboxypropyl)histidine synthase subunit 1 (DPH1) of Kluyveromyces lactis (strain ATCC 8585 / CBS 2359 / DSM 70799 / NBRC 1267 / NRRL Y-1140 / WM37) (Yeast).